Here is a 590-residue protein sequence, read N- to C-terminus: Aspartate--tRNA(Asp/Asn) ligase (590 aa).

Residue glutamate 173 participates in L-aspartate binding. The segment at 197–200 (QIFK) is aspartate. Arginine 219 is a binding site for L-aspartate. ATP is bound by residues 219–221 (RDE) and glutamine 228. An L-aspartate-binding site is contributed by histidine 450. Glutamate 484 serves as a coordination point for ATP. An L-aspartate-binding site is contributed by arginine 491. 536 to 539 (GLDR) provides a ligand contact to ATP.

The protein belongs to the class-II aminoacyl-tRNA synthetase family. Type 1 subfamily. In terms of assembly, homodimer.

The protein localises to the cytoplasm. It carries out the reaction tRNA(Asx) + L-aspartate + ATP = L-aspartyl-tRNA(Asx) + AMP + diphosphate. Its function is as follows. Aspartyl-tRNA synthetase with relaxed tRNA specificity since it is able to aspartylate not only its cognate tRNA(Asp) but also tRNA(Asn). Reaction proceeds in two steps: L-aspartate is first activated by ATP to form Asp-AMP and then transferred to the acceptor end of tRNA(Asp/Asn). In Coxiella burnetii (strain Dugway 5J108-111), this protein is Aspartate--tRNA(Asp/Asn) ligase.